Consider the following 601-residue polypeptide: Elongation factor 4 (601 aa).

A tr-type G domain is found at 5-187; that stretch reads EHIRNFSIIA…AIVERLPAPE (183 aa). GTP contacts are provided by residues 17-22 and 134-137; these read DHGKST and NKID.

It belongs to the TRAFAC class translation factor GTPase superfamily. Classic translation factor GTPase family. LepA subfamily.

The protein resides in the cell inner membrane. It carries out the reaction GTP + H2O = GDP + phosphate + H(+). Functionally, required for accurate and efficient protein synthesis under certain stress conditions. May act as a fidelity factor of the translation reaction, by catalyzing a one-codon backward translocation of tRNAs on improperly translocated ribosomes. Back-translocation proceeds from a post-translocation (POST) complex to a pre-translocation (PRE) complex, thus giving elongation factor G a second chance to translocate the tRNAs correctly. Binds to ribosomes in a GTP-dependent manner. The polypeptide is Elongation factor 4 (Nitratidesulfovibrio vulgaris (strain ATCC 29579 / DSM 644 / CCUG 34227 / NCIMB 8303 / VKM B-1760 / Hildenborough) (Desulfovibrio vulgaris)).